The primary structure comprises 278 residues: Dermonecrotic toxin LspiSicTox-betaIE2ii (278 aa).

Histidine 5 is a catalytic residue. Positions 25 and 27 each coordinate Mg(2+). Histidine 41 (nucleophile) is an active-site residue. Intrachain disulfides connect cysteine 45–cysteine 51 and cysteine 47–cysteine 190. Residue aspartate 85 participates in Mg(2+) binding.

The protein belongs to the arthropod phospholipase D family. Class II subfamily. Mg(2+) serves as cofactor. As to expression, expressed by the venom gland.

It localises to the secreted. It catalyses the reaction an N-(acyl)-sphingosylphosphocholine = an N-(acyl)-sphingosyl-1,3-cyclic phosphate + choline. The catalysed reaction is an N-(acyl)-sphingosylphosphoethanolamine = an N-(acyl)-sphingosyl-1,3-cyclic phosphate + ethanolamine. It carries out the reaction a 1-acyl-sn-glycero-3-phosphocholine = a 1-acyl-sn-glycero-2,3-cyclic phosphate + choline. The enzyme catalyses a 1-acyl-sn-glycero-3-phosphoethanolamine = a 1-acyl-sn-glycero-2,3-cyclic phosphate + ethanolamine. Its function is as follows. Dermonecrotic toxins cleave the phosphodiester linkage between the phosphate and headgroup of certain phospholipids (sphingolipid and lysolipid substrates), forming an alcohol (often choline) and a cyclic phosphate. This toxin acts on sphingomyelin (SM). It may also act on ceramide phosphoethanolamine (CPE), lysophosphatidylcholine (LPC) and lysophosphatidylethanolamine (LPE), but not on lysophosphatidylserine (LPS), and lysophosphatidylglycerol (LPG). It acts by transphosphatidylation, releasing exclusively cyclic phosphate products as second products. Induces dermonecrosis, hemolysis, increased vascular permeability, edema, inflammatory response, and platelet aggregation. The sequence is that of Dermonecrotic toxin LspiSicTox-betaIE2ii from Loxosceles spinulosa (Recluse spider).